The primary structure comprises 672 residues: DNA ligase (672 aa).

NAD(+)-binding positions include 34–38 (DSVYD), 83–84 (SL), and Glu113. Residue Lys115 is the N6-AMP-lysine intermediate of the active site. Positions 136, 170, 286, and 310 each coordinate NAD(+). 4 residues coordinate Zn(2+): Cys404, Cys407, Cys422, and Cys427. One can recognise a BRCT domain in the interval 592 to 672 (STDSSFNGLR…EFIQQMEEES (81 aa)).

The protein belongs to the NAD-dependent DNA ligase family. LigA subfamily. It depends on Mg(2+) as a cofactor. Requires Mn(2+) as cofactor.

It carries out the reaction NAD(+) + (deoxyribonucleotide)n-3'-hydroxyl + 5'-phospho-(deoxyribonucleotide)m = (deoxyribonucleotide)n+m + AMP + beta-nicotinamide D-nucleotide.. DNA ligase that catalyzes the formation of phosphodiester linkages between 5'-phosphoryl and 3'-hydroxyl groups in double-stranded DNA using NAD as a coenzyme and as the energy source for the reaction. It is essential for DNA replication and repair of damaged DNA. This is DNA ligase from Ligilactobacillus salivarius (strain UCC118) (Lactobacillus salivarius).